The following is an 87-amino-acid chain: Large ribosomal subunit protein bL31B (87 aa).

Belongs to the bacterial ribosomal protein bL31 family. Type B subfamily. In terms of assembly, part of the 50S ribosomal subunit.

The sequence is that of Large ribosomal subunit protein bL31B from Burkholderia thailandensis (strain ATCC 700388 / DSM 13276 / CCUG 48851 / CIP 106301 / E264).